A 1304-amino-acid polypeptide reads, in one-letter code: Angiotensin-converting enzyme (1304 aa).

The signal sequence occupies residues 1-27 (MGAASGRRGPGLLLPLLLLLPPQPALA). The Extracellular portion of the chain corresponds to 28–1257 (LDPGLQPGNF…LDAQQARVGQ (1230 aa)). 6 N-linked (GlcNAc...) asparagine glycosylation sites follow: Asn-36, Asn-52, Asn-72, Asn-109, Asn-144, and Asn-158. Peptidase M2 domains follow at residues 38-622 (SADE…LGWP) and 641-1220 (VTDE…LGWP). A disulfide bond links Cys-155 and Cys-163. A chloride-binding site is contributed by Tyr-229. Asn-316 carries an N-linked (GlcNAc...) asparagine glycan. Residues Cys-357 and Cys-375 are joined by a disulfide bond. His-388 contacts Zn(2+). Catalysis depends on Glu-389, which acts as the Proton acceptor 1. His-392 and Glu-416 together coordinate Zn(2+). N-linked (GlcNAc...) asparagine glycans are attached at residues Asn-440, Asn-443, and Asn-507. His-518 serves as the catalytic Proton donor 1. Arg-527 is a chloride binding site. A disulfide bond links Cys-543 and Cys-555. A glycan (N-linked (GlcNAc...) asparagine) is linked at Asn-675. N-linked (GlcNAc...) (complex) asparagine glycosylation is found at Asn-693 and Asn-712. Cys-755 and Cys-761 are joined by a disulfide. Residue Asn-758 is glycosylated (N-linked (GlcNAc...) asparagine). 2 residues coordinate chloride: Arg-789 and Tyr-827. Asn-940 is a glycosylation site (N-linked (GlcNAc...) asparagine). A disulfide bridge connects residues Cys-955 and Cys-973. Residue His-986 participates in Zn(2+) binding. Glu-987 (proton acceptor 2) is an active-site residue. Residues His-990 and Glu-1014 each contribute to the Zn(2+) site. Chloride contacts are provided by Trp-1088 and Arg-1092. Residue His-1116 is the Proton donor 2 of the active site. Arg-1125 provides a ligand contact to chloride. An intrachain disulfide couples Cys-1141 to Cys-1153. The N-linked (GlcNAc...) asparagine glycan is linked to Asn-1189. The juxtamembrane stalk stretch occupies residues 1213–1254 (HGEKLGWPQYNWTPNSARSEGPLPDSGRVSFLGLDLDAQQAR). Residues 1258–1274 (WLLLFLGIALLVATLGL) form a helical membrane-spanning segment. At 1275 to 1304 (SQRLFSIRHRSLHRHSHGPQFDSEVELRHS) the chain is on the cytoplasmic side. Position 1297 is a phosphoserine (Ser-1297).

Belongs to the peptidase M2 family. Monomer and homodimer; homodimerizes following binding to an inhibitor. Interacts with calmodulin (CALM1, CALM2 or CALM3); interaction takes place in the cytoplasmic region and regulates phosphorylation and proteolytic cleavage. Requires Zn(2+) as cofactor. Chloride serves as cofactor. Produced following proteolytic cleavage by secretase enzymes that cleave the transmembrane form in the juxtamembrane stalk region upstream of the transmembrane region. Cleavage can take place at different sites of the juxtamembrane stalk region. In terms of processing, phosphorylated by CK2 on Ser-1297; which allows membrane retention. Phosphorylated on tyrosine residues on its extracellular part, promoting cleavage by secretase enzymes and formation of the soluble form (Angiotensin-converting enzyme, soluble form).

Its subcellular location is the cell membrane. The protein resides in the cytoplasm. It localises to the secreted. The catalysed reaction is Release of a C-terminal dipeptide, oligopeptide-|-Xaa-Yaa, when Xaa is not Pro, and Yaa is neither Asp nor Glu. Thus, conversion of angiotensin I to angiotensin II, with increase in vasoconstrictor activity, but no action on angiotensin II.. It carries out the reaction angiotensin I + H2O = L-histidyl-L-leucine + angiotensin II. It catalyses the reaction bradykinin + H2O = L-Phe-L-Arg + bradykinin(1-7). The enzyme catalyses substance P + H2O = substance P(1-9) + L-Leu-L-Met-NH2. The catalysed reaction is substance P + H2O = substance P(1-8) + Gly-L-Leu-L-Met-NH2. It carries out the reaction substance P + H2O = L-Phe-L-Phe-Gly-L-Leu-L-Met-NH2 + substance P(1-6). It catalyses the reaction neurotensin + H2O = neurotensin(1-11) + L-isoleucyl-L-leucine. The enzyme catalyses goralatide + H2O = N-acetyl-L-seryl-L-aspartate + L-lysyl-L-proline. The catalysed reaction is Met-enkephalin + H2O = L-phenylalanyl-L-methionine + L-tyrosylglycylglycine. It carries out the reaction Leu-enkephalin + H2O = L-tyrosylglycylglycine + L-phenylalanyl-L-leucine. It catalyses the reaction Met-enkephalin-Arg-Phe + H2O = L-arginyl-L-phenylalanine + Met-enkephalin. The dipeptidyl carboxypeptidase activity is strongly activated by chloride. The dipeptidyl carboxypeptidase activity is specifically inhibited by lisinopril, captopril and enalaprilat. With respect to regulation, strongly inhibited by lisinopril and captopril. Its function is as follows. Dipeptidyl carboxypeptidase that removes dipeptides from the C-terminus of a variety of circulating hormones, such as angiotensin I, bradykinin or enkephalins, thereby playing a key role in the regulation of blood pressure, electrolyte homeostasis or synaptic plasticity. Composed of two similar catalytic domains, each possessing a functional active site, with different selectivity for substrates. Plays a major role in the angiotensin-renin system that regulates blood pressure and sodium retention by the kidney by converting angiotensin I to angiotensin II, resulting in an increase of the vasoconstrictor activity of angiotensin. Also able to inactivate bradykinin, a potent vasodilator, and therefore enhance the blood pressure response. Acts as a regulator of synaptic transmission by mediating cleavage of neuropeptide hormones, such as substance P, neurotensin or enkephalins. Catalyzes degradation of different enkephalin neuropeptides (Met-enkephalin, Leu-enkephalin, Met-enkephalin-Arg-Phe and possibly Met-enkephalin-Arg-Gly-Leu). Acts as a regulator of synaptic plasticity in the nucleus accumbens of the brain by mediating cleavage of Met-enkephalin-Arg-Phe, a strong ligand of Mu-type opioid receptor OPRM1, into Met-enkephalin. Met-enkephalin-Arg-Phe cleavage by ACE decreases activation of OPRM1, leading to long-term synaptic potentiation of glutamate release. Also acts as a regulator of hematopoietic stem cell differentiation by mediating degradation of hemoregulatory peptide N-acetyl-SDKP (AcSDKP). Acts as a regulator of cannabinoid signaling pathway by mediating degradation of hemopressin, an antagonist peptide of the cannabinoid receptor CNR1. Involved in amyloid-beta metabolism by catalyzing degradation of Amyloid-beta protein 40 and Amyloid-beta protein 42 peptides, thereby preventing plaque formation. Catalyzes cleavage of cholecystokinin (maturation of Cholecystokinin-8 and Cholecystokinin-5) and Gonadoliberin-1 (both maturation and degradation) hormones. Degradation of hemoregulatory peptide N-acetyl-SDKP (AcSDKP) and amyloid-beta proteins is mediated by the N-terminal catalytic domain, while angiotensin I and cholecystokinin cleavage is mediated by the C-terminal catalytic region. Soluble form that is released in blood plasma and other body fluids following proteolytic cleavage in the juxtamembrane stalk region. Functionally, isoform produced by alternative promoter usage that is specifically expressed in spermatocytes and adult testis, and which is required for male fertility. In contrast to somatic isoforms, only contains one catalytic domain. Acts as a dipeptidyl carboxypeptidase that removes dipeptides from the C-terminus of substrates. The identity of substrates that are needed for male fertility is unknown. May also have a glycosidase activity which releases GPI-anchored proteins from the membrane by cleaving the mannose linkage in the GPI moiety. The GPIase activity was reported to be essential for the egg-binding ability of the sperm. This activity is however unclear and has been challenged by other groups, suggesting that it may be indirect. The chain is Angiotensin-converting enzyme from Pan troglodytes (Chimpanzee).